A 162-amino-acid chain; its full sequence is Selenoprotein F (162 aa).

The N-terminal stretch at 1-28 (MAARRDGWLGPAFGLRLLLATVLQTVSA) is a signal peptide. Sec93 is a non-standard amino acid (selenocysteine).

This sequence belongs to the selenoprotein M/F family. Forms a tight complex with UGGT1/UGCGL1. Interacts with UGGT2/UGCGL2. Interacts with RDH11.

It is found in the endoplasmic reticulum lumen. In terms of biological role, may be involved in redox reactions associated with the formation of disulfide bonds. May contribute to the quality control of protein folding in the endoplasmic reticulum. May regulate protein folding by enhancing the catalytic activity of UGGT1/UGCGL1 and UGGT2/UGCGL2. In Bos taurus (Bovine), this protein is Selenoprotein F.